Here is a 75-residue protein sequence, read N- to C-terminus: Kappa-conotoxin RIIIK (75 aa).

The first 19 residues, 1–19 (MSKLGVLLTICLLLFPLTA), serve as a signal peptide directing secretion. A propeptide spanning residues 20–50 (LPMDGDQPVDRLAERMQDNISSEQHTFFEKR) is cleaved from the precursor. 4-hydroxyproline is present on residues Pro52, Pro63, Pro65, and Pro71. 3 cysteine pairs are disulfide-bonded: Cys54–Cys67, Cys55–Cys72, and Cys62–Cys73. At Thr74 the chain carries Threonine amide.

The protein belongs to the conotoxin M superfamily. As to expression, expressed by the venom duct.

It is found in the secreted. In terms of biological role, kappa-conotoxins inhibits voltage-gated potassium channels (Kv). This synthetic toxin reversibly inhibits the insect potassium channel Shaker K+, the teleost homolog TSha1 and the mammalian Kv1.2/KCNA2 channel. Interacts with the pore region of the insect channel, in a state-dependent manner. Causes seizure when intracerebrovascularly injected into mice. Is also toxic when intrathecally injected into mice, but shows no visible effects by intraperitoneal injection. Shows protective effects on cardiac tissue when administered after an ischemic event. This chain is Kappa-conotoxin RIIIK, found in Conus radiatus (Rayed cone).